A 502-amino-acid polypeptide reads, in one-letter code: UDP-N-acetylglucosamine diphosphorylase 2 (502 aa).

A Substrate binding motif is present at residues 130–133 (LSGG). A substrate-binding site is contributed by Asn-250. A Substrate binding motif is present at residues 332–333 (EY). Lys-429 serves as a coordination point for substrate.

The protein belongs to the UDPGP type 1 family. As to quaternary structure, monomer. It depends on Mg(2+) as a cofactor. Mn(2+) is required as a cofactor. As to expression, expressed in root tips, stipules, lateral root primordia, immature anthers and at the branching points of the flowering shoots.

It is found in the cytoplasm. It catalyses the reaction N-acetyl-alpha-D-glucosamine 1-phosphate + UTP + H(+) = UDP-N-acetyl-alpha-D-glucosamine + diphosphate. The enzyme catalyses N-acetyl-alpha-D-galactosamine 1-phosphate + UTP + H(+) = UDP-N-acetyl-alpha-D-galactosamine + diphosphate. The catalysed reaction is alpha-D-glucose 1-phosphate + UTP + H(+) = UDP-alpha-D-glucose + diphosphate. Its pathway is nucleotide-sugar biosynthesis; UDP-N-acetyl-alpha-D-glucosamine biosynthesis; UDP-N-acetyl-alpha-D-glucosamine from N-acetyl-alpha-D-glucosamine 1-phosphate: step 1/1. In terms of biological role, uridylyltransferase involved in the biosynthesis of UDP-glucosamine, an essential precursor for glycoprotein and glycolipid synthesis. Can use UDP-glucosamine, the 4-epimer UDP-galactosamine and UDP-glucose as substrates. Acts redundantly with GLCNAC1PUT1. Required for gametogenesis and embryo development. The protein is UDP-N-acetylglucosamine diphosphorylase 2 (GLCNAC1PUT2) of Arabidopsis thaliana (Mouse-ear cress).